A 350-amino-acid chain; its full sequence is Ketol-acid reductoisomerase (NADP(+)) (350 aa).

The KARI N-terminal Rossmann domain occupies 4 to 187; it reads VSITTDYSRM…GGARANIIKT (184 aa). Residues 30-33, R53, T58, and 88-91 contribute to the NADP(+) site; these read YGSQ and DMVQ. The active site involves H113. Position 139 (G139) interacts with NADP(+). In terms of domain architecture, KARI C-terminal knotted spans 188 to 333; the sequence is TFKEETETDL…KQLRAKMVWL (146 aa). 4 residues coordinate Mg(2+): D196, E200, E232, and E236. S257 contributes to the substrate binding site.

Belongs to the ketol-acid reductoisomerase family. Mg(2+) is required as a cofactor.

It catalyses the reaction (2R)-2,3-dihydroxy-3-methylbutanoate + NADP(+) = (2S)-2-acetolactate + NADPH + H(+). It carries out the reaction (2R,3R)-2,3-dihydroxy-3-methylpentanoate + NADP(+) = (S)-2-ethyl-2-hydroxy-3-oxobutanoate + NADPH + H(+). Its pathway is amino-acid biosynthesis; L-isoleucine biosynthesis; L-isoleucine from 2-oxobutanoate: step 2/4. It participates in amino-acid biosynthesis; L-valine biosynthesis; L-valine from pyruvate: step 2/4. Its function is as follows. Involved in the biosynthesis of branched-chain amino acids (BCAA). Catalyzes an alkyl-migration followed by a ketol-acid reduction of (S)-2-acetolactate (S2AL) to yield (R)-2,3-dihydroxy-isovalerate. In the isomerase reaction, S2AL is rearranged via a Mg-dependent methyl migration to produce 3-hydroxy-3-methyl-2-ketobutyrate (HMKB). In the reductase reaction, this 2-ketoacid undergoes a metal-dependent reduction by NADPH to yield (R)-2,3-dihydroxy-isovalerate. This chain is Ketol-acid reductoisomerase (NADP(+)), found in Xylella fastidiosa (strain 9a5c).